A 477-amino-acid chain; its full sequence is Chaperonin GroEL 2 (477 aa).

Residues 29–32, 86–90, and Gly416 each bind ATP; these read TLGP and DGTTT.

This sequence belongs to the chaperonin (HSP60) family. As to quaternary structure, forms a cylinder of 14 subunits composed of two heptameric rings stacked back-to-back. Interacts with the co-chaperonin GroES.

It is found in the cytoplasm. The catalysed reaction is ATP + H2O + a folded polypeptide = ADP + phosphate + an unfolded polypeptide.. Together with its co-chaperonin GroES, plays an essential role in assisting protein folding. The GroEL-GroES system forms a nano-cage that allows encapsulation of the non-native substrate proteins and provides a physical environment optimized to promote and accelerate protein folding. The sequence is that of Chaperonin GroEL 2 from Streptomyces lividans.